The primary structure comprises 2090 residues: Dysferlin (2090 aa).

One can recognise a C2 1 domain in the interval 1 to 101 (MLRVFILFAE…LATPSLSASF (101 aa)). Over 1–2056 (MLRVFILFAE…FILWRRFRCA (2056 aa)) the chain is Cytoplasmic. The Ca(2+) site is built by D18, I19, D21, and N40. Residues 130-217 (VPLFPPPASL…SAPPRKLLSD (88 aa)) are disordered. Residues 155–172 (GGEEDTEDQGLTGDEAEP) are compositionally biased toward acidic residues. G164 carries the phosphoserine modification. Position 166 is a phosphothreonine (T166). G167 carries the phosphoserine modification. The span at 188 to 199 (PRKPPSHPPPHY) shows a compositional bias: pro residues. C2 domains are found at residues 206 to 323 (RSSA…RKWL), 362 to 498 (DKED…EEEP), 1146 to 1272 (GVNR…PLTR), 1320 to 1448 (PPPQ…AESP), 1571 to 1689 (PMPP…ARCG), and 1805 to 1953 (GRPG…EKCS). At A209 the chain carries Phosphoserine. Phosphothreonine is present on P219. D411, D419, D467, D469, D475, D1178, D1184, D1240, and D1242 together coordinate Ca(2+). 7 residues coordinate Ca(2+): D1604, D1610, D1659, D1661, D1924, S1927, and D1930. The tract at residues 2005–2027 (SEHEERPAGQGRDEPNMNPKLED) is disordered. A helical membrane pass occupies residues 2057 to 2077 (IILFIILFILLLFLGVFVYAF). Residues 2078–2090 (PNYAAMKLVKPFR) lie on the Extracellular side of the membrane.

It belongs to the ferlin family. In terms of assembly, interacts with CAV3. Interacts with AHNAK; the interaction is direct and Ca(2+)-independent. Interacts with AHNAK2; the interaction is direct and Ca(2+)-independent. Interacts with ANXA1; the interaction is Ca(2+)- and injury state-dependent. Interacts with ANXA2; the interaction is Ca(2+)- and injury state-dependent. Interacts with CACNA1S and PARVB. Interacts with TRIM72/MG53; interaction is required for transport to sites of cell injury during repair patch formation. Interacts with RIPOR2; this interaction occurs during early myogenic differentiation. Requires Ca(2+) as cofactor. Expressed in skeletal and cardiac muscles (at protein level). Expressed in skeletal muscle and heart. Also found in brain, liver and kidney.

Its subcellular location is the cell membrane. The protein localises to the sarcolemma. It is found in the cytoplasmic vesicle membrane. In terms of biological role, key calcium ion sensor involved in the Ca(2+)-triggered synaptic vesicle-plasma membrane fusion. Plays a role in the sarcolemma repair mechanism of both skeletal muscle and cardiomyocytes that permits rapid resealing of membranes disrupted by mechanical stress. The chain is Dysferlin (Dysf) from Mus musculus (Mouse).